The sequence spans 88 residues: Small ribosomal subunit protein bS16c (88 aa).

Belongs to the bacterial ribosomal protein bS16 family.

Its subcellular location is the plastid. It localises to the chloroplast. In Calycanthus floridus var. glaucus (Eastern sweetshrub), this protein is Small ribosomal subunit protein bS16c.